A 1293-amino-acid polypeptide reads, in one-letter code: Phosphoribosylformylglycinamidine synthase (1293 aa).

ATP-binding positions include 305–316 (GAATGSGGEIRD) and Ala-676. The segment at 305–327 (GAATGSGGEIRDEGATGRGSKPK) is disordered. Mg(2+) is bound by residues Asp-677, Glu-716, Asn-720, and Asp-884. Ser-886 provides a ligand contact to ATP. A Glutamine amidotransferase type-1 domain is found at 1040 to 1293 (MAILREQGVN…MFRNARVNLG (254 aa)). Cys-1133 functions as the Nucleophile in the catalytic mechanism. Residues His-1258 and Glu-1260 contribute to the active site.

This sequence in the N-terminal section; belongs to the FGAMS family. Monomer.

It localises to the cytoplasm. It catalyses the reaction N(2)-formyl-N(1)-(5-phospho-beta-D-ribosyl)glycinamide + L-glutamine + ATP + H2O = 2-formamido-N(1)-(5-O-phospho-beta-D-ribosyl)acetamidine + L-glutamate + ADP + phosphate + H(+). It participates in purine metabolism; IMP biosynthesis via de novo pathway; 5-amino-1-(5-phospho-D-ribosyl)imidazole from N(2)-formyl-N(1)-(5-phospho-D-ribosyl)glycinamide: step 1/2. Its function is as follows. Phosphoribosylformylglycinamidine synthase involved in the purines biosynthetic pathway. Catalyzes the ATP-dependent conversion of formylglycinamide ribonucleotide (FGAR) and glutamine to yield formylglycinamidine ribonucleotide (FGAM) and glutamate. This is Phosphoribosylformylglycinamidine synthase from Shewanella oneidensis (strain ATCC 700550 / JCM 31522 / CIP 106686 / LMG 19005 / NCIMB 14063 / MR-1).